Consider the following 366-residue polypeptide: Endophilin-A (366 aa).

Positions 18-248 (TEKMGGAEGT…LQEKRSEAES (231 aa)) constitute a BAR domain. The stretch at 227–247 (QCADVLRGLQETLQEKRSEAE) forms a coiled coil. A disordered region spans residues 266-295 (GGGGGLNEDGTPSHISSSASPLPSPMRSPA). Residues 277-294 (PSHISSSASPLPSPMRSP) are compositionally biased toward low complexity. Positions 305-364 (QQQPCCQALYDFDPENPGELGFKENDIITLLNRVDDNWYEGSVNGRTGYFPQSYVQVQVP) constitute an SH3 domain.

Belongs to the endophilin family.

The protein localises to the cytoplasm. It localises to the membrane. Required presynaptically at the neuromuscular junction. Implicated in synaptic vesicle endocytosis. The sequence is that of Endophilin-A from Drosophila willistoni (Fruit fly).